The following is a 205-amino-acid chain: Ribosomal RNA small subunit methyltransferase G 1 (205 aa).

S-adenosyl-L-methionine is bound by residues Gly-77, Leu-82, 100 to 102, 129 to 130, and Arg-138; these read EKS and LE.

It belongs to the methyltransferase superfamily. RNA methyltransferase RsmG family.

It localises to the cytoplasm. The catalysed reaction is guanosine(527) in 16S rRNA + S-adenosyl-L-methionine = N(7)-methylguanosine(527) in 16S rRNA + S-adenosyl-L-homocysteine. Functionally, specifically methylates the N7 position of guanine in position 527 of 16S rRNA. The protein is Ribosomal RNA small subunit methyltransferase G 1 of Bdellovibrio bacteriovorus (strain ATCC 15356 / DSM 50701 / NCIMB 9529 / HD100).